A 655-amino-acid polypeptide reads, in one-letter code: 1-deoxy-D-xylulose-5-phosphate synthase (655 aa).

Residues His-73 and Ser-114–Ala-116 contribute to the thiamine diphosphate site. Asp-145 lines the Mg(2+) pocket. Thiamine diphosphate is bound by residues Gly-146 to Ala-147, Asn-174, Tyr-285, and Glu-367. Asn-174 contributes to the Mg(2+) binding site. The segment at Arg-626 to Arg-655 is disordered. Residues Arg-646 to Arg-655 are compositionally biased toward basic and acidic residues.

It belongs to the transketolase family. DXPS subfamily. As to quaternary structure, homodimer. Mg(2+) serves as cofactor. The cofactor is thiamine diphosphate.

It carries out the reaction D-glyceraldehyde 3-phosphate + pyruvate + H(+) = 1-deoxy-D-xylulose 5-phosphate + CO2. It functions in the pathway metabolic intermediate biosynthesis; 1-deoxy-D-xylulose 5-phosphate biosynthesis; 1-deoxy-D-xylulose 5-phosphate from D-glyceraldehyde 3-phosphate and pyruvate: step 1/1. Catalyzes the acyloin condensation reaction between C atoms 2 and 3 of pyruvate and glyceraldehyde 3-phosphate to yield 1-deoxy-D-xylulose-5-phosphate (DXP). The protein is 1-deoxy-D-xylulose-5-phosphate synthase of Frankia casuarinae (strain DSM 45818 / CECT 9043 / HFP020203 / CcI3).